A 512-amino-acid chain; its full sequence is Tyrosine-protein kinase Lyn (512 aa).

Residues 1-45 (MGCIKSKRKDNLNDDEVDSKTQPVRNTDRTIYVRDPTSNKQQRPV) are disordered. G2 carries N-myristoyl glycine lipidation. C3 carries S-palmitoyl cysteine lipidation. Residue S19 is modified to Phosphoserine. The SH3 domain maps to 63–123 (EQGDIVVALY…PSNYVAKVNT (61 aa)). The 98-residue stretch at 129-226 (WFFKDITRKD…GLCRRLEKAC (98 aa)) folds into the SH2 domain. Phosphotyrosine is present on Y193. A Phosphoserine modification is found at S228. One can recognise a Protein kinase domain in the interval 247–501 (IKLVKKLGAG…YLQSVLDDFY (255 aa)). Residues 253–261 (LGAGQFGEV) and K275 contribute to the ATP site. A phosphotyrosine mark is found at Y306 and Y316. D367 acts as the Proton acceptor in catalysis. Y397 carries the phosphotyrosine; by autocatalysis modification. Residues Y460 and Y473 each carry the phosphotyrosine modification. Phosphotyrosine; by autocatalysis, CSK and MATK is present on Y508.

Belongs to the protein kinase superfamily. Tyr protein kinase family. SRC subfamily. As to quaternary structure, interacts with TEC. Interacts (via SH2 domain) with FLT3 (tyrosine phosphorylated). Interacts with LIME1 and with CD79A upon activation of the B-cell antigen receptor. Interacts with the B-cell receptor complex. Interacts with phosphorylated THEMIS2. Interacts with EPOR. Interacts with MS4A2/FCER1B. Interaction (via the SH2 and SH3 domains) with MUC1 is stimulated by IL7 and the subsequent phosphorylation increases the binding between MUC1 and CTNNB1/beta-catenin. Interacts with ADAM15. Interacts with NDFIP2 and more weakly with NDFIP1. Interacts with FASLG. Interacts with KIT. Interacts with HCLS1. Interacts with FCGR2B. Interacts with FCGR1A; the interaction may be indirect. Interacts with CD19, CD22, CD79A and CD79B. Interacts (via SH3 domain) with CBLC, PPP1R15A and PDE4A. Interacts with TGFB1I1. Interacts (via SH3 domain) with PIK3R1, the regulatory subunit of phosphatidylinositol 3-kinase; this interaction enhances phosphatidylinositol 3-kinase activity. Interacts with CSF2RB, the common subunit of the IL3, IL5 and CSF2 receptors. Interacts with PAG1; identified in a complex with PAG1 and STAT3. Interacts with ABL1. Interacts with PTPN6/SHP-1. Interacts (via SH3 domain) with SCIMP (via proline-rich region). This interaction facilitates the phosphorylation of SCIMP on 'Tyr-96', which enhances binding of SCIMP to TLR4, and consequently the phosphorylation of TLR4 in response to stimulation by lipopolysaccharide in macrophages. Interacts with LPXN (via LD motif 3) and the interaction is induced upon B-cell antigen receptor (BCR) activation. Interacts (via SH3-domain) with ANKRD54 (via ankyrin repeat region) in an activation-independent status of LYN. Forms a multiprotein complex with ANKRD54 and HCLS1. Interacts (via SH2 and SH3 domains) with UNC119; leading to LYN activation. Interacts with CD36. Interacts with LYN. Interacts with SKAP1 and FYB1; this interaction promotes the phosphorylation of CLNK. Interacts with BCAR1/CAS and NEDD9/HEF1. Ubiquitinated by CBL, leading to its degradation. In terms of processing, autophosphorylated. Phosphorylated on tyrosine residues in response to KIT signaling. Phosphorylation at Tyr-397 is required for optimal activity. Phosphorylation at Tyr-508 inhibits kinase activity. Phosphorylated at Tyr-508 by CSK. Dephosphorylated by PTPRC/CD45. Becomes rapidly phosphorylated upon activation of the B-cell receptor and the immunoglobulin receptor FCGR1A. Phosphorylated in response to ITGB1 in B-cells. In terms of tissue distribution, detected in bone marrow-derived monocytes and macrophages (at protein level). Expressed predominantly in B-lymphoid and myeloid cells.

The protein resides in the cell membrane. The protein localises to the nucleus. It localises to the cytoplasm. It is found in the perinuclear region. Its subcellular location is the golgi apparatus. The protein resides in the membrane. The catalysed reaction is L-tyrosyl-[protein] + ATP = O-phospho-L-tyrosyl-[protein] + ADP + H(+). Subject to autoinhibition, mediated by intramolecular interactions between the SH2 domain and the C-terminal phosphotyrosine. Phosphorylation at Tyr-397 is required for optimal activity. Phosphorylated by CSK at Tyr-508; phosphorylation at Tyr-508 inhibits kinase activity. Kinase activity is modulated by dephosphorylation by PTPRC/CD45. Inhibited by dasatinib, PP2, and SU6656. Its function is as follows. Non-receptor tyrosine-protein kinase that transmits signals from cell surface receptors and plays an important role in the regulation of innate and adaptive immune responses, hematopoiesis, responses to growth factors and cytokines, integrin signaling, but also responses to DNA damage and genotoxic agents. Functions primarily as negative regulator, but can also function as activator, depending on the context. Required for the initiation of the B-cell response, but also for its down-regulation and termination. Plays an important role in the regulation of B-cell differentiation, proliferation, survival and apoptosis, and is important for immune self-tolerance. Acts downstream of several immune receptors, including the B-cell receptor, CD79A, CD79B, CD5, CD19, CD22, FCER1, FCGR2, FCGR1A, TLR2 and TLR4. Plays a role in the inflammatory response to bacterial lipopolysaccharide. Mediates the responses to cytokines and growth factors in hematopoietic progenitors, platelets, erythrocytes, and in mature myeloid cells, such as dendritic cells, neutrophils and eosinophils. Acts downstream of EPOR, KIT, MPL, the chemokine receptor CXCR4, as well as the receptors for IL3, IL5 and CSF2. Plays an important role in integrin signaling. Regulates cell proliferation, survival, differentiation, migration, adhesion, degranulation, and cytokine release. Involved in the regulation of endothelial activation, neutrophil adhesion and transendothelial migration. Down-regulates signaling pathways by phosphorylation of immunoreceptor tyrosine-based inhibitory motifs (ITIM), that then serve as binding sites for phosphatases, such as PTPN6/SHP-1, PTPN11/SHP-2 and INPP5D/SHIP-1, that modulate signaling by dephosphorylation of kinases and their substrates. Phosphorylates LIME1 in response to CD22 activation. Phosphorylates BTK, CBL, CD5, CD19, CD72, CD79A, CD79B, CSF2RB, DOK1, HCLS1, MS4A2/FCER1B, SYK and TEC. Phosphorylates PIRB at Tyr-794 and Tyr-824, which is required for PIRB interaction with PTPN6/SHP-1 and PTPN11/SHP-2. Promotes phosphorylation of SIRPA, PTPN6/SHP-1, PTPN11/SHP-2 and INPP5D/SHIP-1. Required for rapid phosphorylation of FER in response to FCER1 activation. Mediates KIT phosphorylation. Acts as an effector of EPOR (erythropoietin receptor) in controlling KIT expression and may play a role in erythroid differentiation during the switch between proliferation and maturation. Depending on the context, activates or inhibits several signaling cascades. Regulates phosphatidylinositol 3-kinase activity and AKT1 activation. Regulates activation of the MAP kinase signaling cascade, including activation of MAP2K1/MEK1, MAPK1/ERK2, MAPK3/ERK1, MAPK8/JNK1 and MAPK9/JNK2. Mediates activation of STAT5A and/or STAT5B. Phosphorylates LPXN on 'Tyr-72'. Kinase activity facilitates TLR4-TLR6 heterodimerization and signal initiation. Phosphorylates SCIMP on 'Tyr-96'; this enhances binding of SCIMP to TLR4, promoting the phosphorylation of TLR4, and a selective cytokine response to lipopolysaccharide in macrophages. Phosphorylates CLNK. Phosphorylates BCAR1/CAS and NEDD9/HEF1. This Mus musculus (Mouse) protein is Tyrosine-protein kinase Lyn (Lyn).